The chain runs to 306 residues: Leucine-rich repeat-containing protein 59 (306 aa).

Met-1 carries the post-translational modification N-acetylmethionine. Position 2 is an N-acetylthreonine; in Leucine-rich repeat-containing protein 59, N-terminally processed (Thr-2). At 2–244 (TKAGSKGGNL…KPPPRKHTRS (243 aa)) the chain is on the cytoplasmic side. 5 LRR repeats span residues 10-31 (NLRD…NEVP), 40-62 (KATV…CGLT), 63-84 (HLVK…FGRL), 86-107 (NLQH…FAQL), and 109-128 (SLKW…AKVA). Residues Ser-23 and Ser-25 each carry the phosphoserine modification. Lys-73 carries the N6-succinyllysine modification. Lys-135 carries the post-translational modification N6-acetyllysine. The stretch at 152–216 (QADQERERQR…KAAKREQEKK (65 aa)) forms a coiled coil. The span at 175-221 (AKQRAKEAQERELRKREKAEEKERRRKEYDALKAAKREQEKKPKKET) shows a compositional bias: basic and acidic residues. The segment at 175 to 241 (AKQRAKEAQE…RPRKPPPRKH (67 aa)) is disordered. A compositionally biased stretch (basic residues) spans 229-241 (SSSRPRKPPPRKH). The helical transmembrane segment at 245–265 (WAVLKLLLLLLLCVAGGLVAC) threads the bilayer. Over 266–306 (RVTELQQQPLCTSVNTIYDNAVRGLRSHDILQWVLQTDSQQ) the chain is Lumenal.

Can form homodimers. Interacts with SGO1. Interacts with FGF1.

The protein localises to the microsome membrane. Its subcellular location is the endoplasmic reticulum membrane. The protein resides in the nucleus envelope. Its function is as follows. Required for nuclear import of FGF1, but not that of FGF2. Might regulate nuclear import of exogenous FGF1 by facilitating interaction with the nuclear import machinery and by transporting cytosolic FGF1 to, and possibly through, the nuclear pores. This is Leucine-rich repeat-containing protein 59 (LRRC59) from Bos taurus (Bovine).